The primary structure comprises 130 residues: Fluoride-specific ion channel FluC (130 aa).

Helical transmembrane passes span 1–21, 36–56, 65–85, and 103–123; these read MGEI…RYGL, GTLI…QWGF, LKLM…TFSY, and ILAN…LGSL. Residues glycine 75 and threonine 78 each contribute to the Na(+) site.

It belongs to the fluoride channel Fluc/FEX (TC 1.A.43) family.

It localises to the cell membrane. The catalysed reaction is fluoride(in) = fluoride(out). Its activity is regulated as follows. Na(+) is not transported, but it plays an essential structural role and its presence is essential for fluoride channel function. Its function is as follows. Fluoride-specific ion channel. Important for reducing fluoride concentration in the cell, thus reducing its toxicity. In Dehalococcoides mccartyi (strain ATCC BAA-2266 / KCTC 15142 / 195) (Dehalococcoides ethenogenes (strain 195)), this protein is Fluoride-specific ion channel FluC.